Reading from the N-terminus, the 434-residue chain is Peptidase B (434 aa).

Lysine 198 and aspartate 203 together coordinate Mn(2+). Residue lysine 210 is part of the active site. Mn(2+)-binding residues include aspartate 221, aspartate 280, and glutamate 282. Arginine 284 is a catalytic residue.

This sequence belongs to the peptidase M17 family. In terms of assembly, homohexamer. It depends on Mn(2+) as a cofactor.

It localises to the cytoplasm. It catalyses the reaction Release of an N-terminal amino acid, Xaa, from a peptide or arylamide. Xaa is preferably Glu or Asp but may be other amino acids, including Leu, Met, His, Cys and Gln.. Probably plays an important role in intracellular peptide degradation. The chain is Peptidase B from Pasteurella multocida (strain Pm70).